A 710-amino-acid chain; its full sequence is Effector protein AvrPphD (710 aa).

Residues 1 to 15 (MNPLRSIQHNITTPP) are compositionally biased toward polar residues. Disordered regions lie at residues 1–36 (MNPL…HPKR), 136–155 (ISFD…SVLS), and 173–207 (SSSL…DSGS).

It localises to the secreted. Its function is as follows. Effector protein involved in non-host recognition and able to elicit hypersensitive response (HR). In Pseudomonas savastanoi pv. phaseolicola (Pseudomonas syringae pv. phaseolicola), this protein is Effector protein AvrPphD (avrPphD).